We begin with the raw amino-acid sequence, 138 residues long: MSGTLLAFDFGTKSIGVAIGQRITGTARPLPAIKAQDGTPDWTLIERLLKEWQPDEIIVGLPLNMDGTEQPLTARARKFANRIHGRFGVTVTLHDERLSTVEARSGLFEQGGYRALNKGKVDSASAVIILESYFEQGY.

The protein belongs to the YqgF nuclease family.

The protein localises to the cytoplasm. Its function is as follows. Could be a nuclease involved in processing of the 5'-end of pre-16S rRNA. The polypeptide is Putative pre-16S rRNA nuclease (Salmonella arizonae (strain ATCC BAA-731 / CDC346-86 / RSK2980)).